The sequence spans 603 residues: DNA mismatch repair protein MutL (603 aa).

This sequence belongs to the DNA mismatch repair MutL/HexB family.

Functionally, this protein is involved in the repair of mismatches in DNA. It is required for dam-dependent methyl-directed DNA mismatch repair. May act as a 'molecular matchmaker', a protein that promotes the formation of a stable complex between two or more DNA-binding proteins in an ATP-dependent manner without itself being part of a final effector complex. This Nitrobacter hamburgensis (strain DSM 10229 / NCIMB 13809 / X14) protein is DNA mismatch repair protein MutL.